The primary structure comprises 346 residues: Biotin synthase (346 aa).

Residues 38–256 enclose the Radical SAM core domain; it reads QQVQVSTLLS…IAVARIMMPT (219 aa). Residues Cys-53, Cys-57, and Cys-60 each contribute to the [4Fe-4S] cluster site. Residues Cys-97, Cys-128, Cys-188, and Arg-260 each coordinate [2Fe-2S] cluster.

This sequence belongs to the radical SAM superfamily. Biotin synthase family. As to quaternary structure, homodimer. It depends on [4Fe-4S] cluster as a cofactor. [2Fe-2S] cluster is required as a cofactor.

It catalyses the reaction (4R,5S)-dethiobiotin + (sulfur carrier)-SH + 2 reduced [2Fe-2S]-[ferredoxin] + 2 S-adenosyl-L-methionine = (sulfur carrier)-H + biotin + 2 5'-deoxyadenosine + 2 L-methionine + 2 oxidized [2Fe-2S]-[ferredoxin]. It functions in the pathway cofactor biosynthesis; biotin biosynthesis; biotin from 7,8-diaminononanoate: step 2/2. Catalyzes the conversion of dethiobiotin (DTB) to biotin by the insertion of a sulfur atom into dethiobiotin via a radical-based mechanism. The protein is Biotin synthase of Salmonella choleraesuis (strain SC-B67).